Here is a 593-residue protein sequence, read N- to C-terminus: Tyrosine-protein phosphatase non-receptor type 11 (593 aa).

Thr2 is modified (N-acetylthreonine). SH2 domains are found at residues 6 to 102 and 112 to 216; these read WFHP…KYPL and WFHG…KQPL. Phosphotyrosine occurs at positions 62 and 66. The Tyrosine-protein phosphatase domain occupies 247-517; that stretch reads FWEEFETLQQ…EAQYRFIYMA (271 aa). Substrate is bound by residues Asp425, 459–465, and Gln506; that span reads CSAGIGR. Cys459 (phosphocysteine intermediate) is an active-site residue. 2 positions are modified to phosphotyrosine; by PDGFR: Tyr542 and Tyr580.

This sequence belongs to the protein-tyrosine phosphatase family. Non-receptor class 2 subfamily. As to quaternary structure, interacts with phosphorylated SIT1, LIME1, BCAR3 and MZPL1. Interacts with FCRL4, FCRL6, ANKHD1, SHB, INPP5D/SHIP1 and CD84. Interacts with MILR1 (tyrosine-phosphorylated). Interacts with FLT1 (tyrosine-phosphorylated), FLT3 (tyrosine-phosphorylated), FLT4 (tyrosine-phosphorylated), KIT and GRB2. Interacts with PTPNS1. Interacts with KIR2DL1; the interaction is enhanced by ARRB2. Interacts (via SH2 domain) with TEK/TIE2 (tyrosine phosphorylated). Interacts with GAB2. Interacts with TERT; the interaction retains TERT in the nucleus. Interacts with PECAM1 and FER. Interacts with EPHA2 (activated); participates in PTK2/FAK1 dephosphorylation in EPHA2 downstream signaling. Interacts with PDGFRA (tyrosine phosphorylated). Interacts with PDGFRB (tyrosine phosphorylated); this interaction increases the PTPN11 phosphatase activity. Interacts with ROS1; this mediates PTPN11 phosphorylation. Interacts with CEACAM1 (via cytoplasmic domain); this interaction depends on the monomer/dimer equilibrium and is phosphorylation-dependent. Interacts with MPIG6B (via ITIM motif). Interacts with SIGLEC10. Interacts with CLEC12B (via ITIM motif); this interaction triggers dephosphorylation and activation of PTPN11. Interacts (via SH2 domains) with NEDD9/CAS-L; the interaction is enhanced when NEDD9/CAS-L is tyrosine phosphorylated. Phosphorylated on Tyr-542 and Tyr-580 upon receptor protein tyrosine kinase activation; which creates a binding site for GRB2 and other SH2-containing proteins. Phosphorylated upon activation of the receptor-type kinase FLT3. Phosphorylated upon activation of the receptor-type kinase PDGFRA. Phosphorylated by activated PDGFRB. Expressed in brain, muscle and lung.

The protein resides in the cytoplasm. The catalysed reaction is O-phospho-L-tyrosyl-[protein] + H2O = L-tyrosyl-[protein] + phosphate. With respect to regulation, inhibited by orthovanadate, molybdate and spermidine. Acts downstream of various receptor and cytoplasmic protein tyrosine kinases to participate in the signal transduction from the cell surface to the nucleus. Positively regulates MAPK signal transduction pathway. Dephosphorylates GAB1, ARHGAP35 and EGFR. Dephosphorylates ROCK2 at 'Tyr-722' resulting in stimulation of its RhoA binding activity. Dephosphorylates CDC73. Dephosphorylates SOX9 on tyrosine residues, leading to inactivate SOX9 and promote ossification. Dephosphorylates tyrosine-phosphorylated NEDD9/CAS-L. The sequence is that of Tyrosine-protein phosphatase non-receptor type 11 (Ptpn11) from Rattus norvegicus (Rat).